The primary structure comprises 1465 residues: DNA polymerase III PolC-type (1465 aa).

The region spanning 431–583 (DVETTGLSAM…YDAEATGRLL (153 aa)) is the Exonuclease domain.

Belongs to the DNA polymerase type-C family. PolC subfamily.

It localises to the cytoplasm. The catalysed reaction is DNA(n) + a 2'-deoxyribonucleoside 5'-triphosphate = DNA(n+1) + diphosphate. Functionally, required for replicative DNA synthesis. This DNA polymerase also exhibits 3' to 5' exonuclease activity. In Streptococcus pyogenes, this protein is DNA polymerase III PolC-type.